A 389-amino-acid polypeptide reads, in one-letter code: Ankyrin repeat domain-containing protein 42 (389 aa).

Residues 1–21 are disordered; that stretch reads MPGVANSGPSTSSRETANPCS. A compositionally biased stretch (polar residues) spans 7–19; the sequence is SGPSTSSRETANP. ANK repeat units follow at residues 25–60, 64–93, 97–126, 130–159, 163–192, 200–232, 235–265, 269–298, and 302–332; these read VHFG…DITH, RGWT…NLTA, RGCT…DPSV, REWR…SIED, NGNL…SATQ, NGEN…DLED, TLAF…NINE, NGST…DSNI, and AGER…DIDD.

The chain is Ankyrin repeat domain-containing protein 42 (ANKRD42) from Homo sapiens (Human).